Reading from the N-terminus, the 320-residue chain is FHA domain-containing protein FHA2 (320 aa).

Ala2 is modified (N-acetylalanine). Residues 32 to 89 (IILGRNSKKATVDVDLSSLGGGMNISRNHARIFYDFTRRRFSLEVLGKNGCLVEGVLH) enclose the FHA domain. Residues 138 to 211 (VPYHNYQSGP…REGRSKVDRE (74 aa)) are disordered. The segment covering 163 to 178 (EYDDEDDDDDDDEEDD) has biased composition (acidic residues). A compositionally biased stretch (basic and acidic residues) spans 198–210 (GEKKREGRSKVDR).

Widely expressed.

The protein resides in the nucleus. In terms of biological role, may play a role in the control of plant organ development and specifically in the regulation of stamen development. Does not show transactivation activity in yeast. The protein is FHA domain-containing protein FHA2 of Arabidopsis thaliana (Mouse-ear cress).